We begin with the raw amino-acid sequence, 164 residues long: Thiol peroxidase (164 aa).

In terms of domain architecture, Thioredoxin spans 16–162 (LQVGDIAKDF…YEAAINAAKI (147 aa)). Residue Cys58 is the Cysteine sulfenic acid (-SOH) intermediate of the active site. Cys58 and Cys92 are disulfide-bonded.

Belongs to the peroxiredoxin family. Tpx subfamily. In terms of assembly, homodimer.

The catalysed reaction is a hydroperoxide + [thioredoxin]-dithiol = an alcohol + [thioredoxin]-disulfide + H2O. Its function is as follows. Thiol-specific peroxidase that catalyzes the reduction of hydrogen peroxide and organic hydroperoxides to water and alcohols, respectively. Plays a role in cell protection against oxidative stress by detoxifying peroxides. This Streptococcus agalactiae serotype V (strain ATCC BAA-611 / 2603 V/R) protein is Thiol peroxidase.